Here is a 219-residue protein sequence, read N- to C-terminus: Probable nicotinate-nucleotide adenylyltransferase (219 aa).

Belongs to the NadD family.

It catalyses the reaction nicotinate beta-D-ribonucleotide + ATP + H(+) = deamido-NAD(+) + diphosphate. It functions in the pathway cofactor biosynthesis; NAD(+) biosynthesis; deamido-NAD(+) from nicotinate D-ribonucleotide: step 1/1. Its function is as follows. Catalyzes the reversible adenylation of nicotinate mononucleotide (NaMN) to nicotinic acid adenine dinucleotide (NaAD). This chain is Probable nicotinate-nucleotide adenylyltransferase, found in Erythrobacter litoralis (strain HTCC2594).